The chain runs to 460 residues: MFISILLLALAVERILCANILCVFPTPAYSHQSVFSAYIDKLSWAGHNVTVITPMPRAVDHVHQVVSSLSVHYFNNLIKNSTMIKKRGVVADETTVTKENYMGLINLVAHEIKSPNVTRLLRNKGNKFDLIVCEAYVSYILVFGAIYDAPVIQFSSGYAIPENFETVGGEVARNHIKHPNIWRSDFSKSNFEQLMTENYLKNEWALLEKEQENMLKRDFGYHHDMCQLKSRVLMLFINVPAVFDNNRDVSNNIQYLGGIHLKKPRTVRDSRLLSFMEKHHIIVYASFGSGIDVLNMDANLIAEFVRVFNSIPYAVLWKVDSSIHLKHNISSNVHTQSWFPQRDVLNHPHIKVFITQGGVQSTDEAVNSGVPMIGIPIMGDQFYNVRRYTELGIGEKVNILRLEEEGLDRKIKNLVHNKSYELNIKRLNLFISDTPVKPLRKALWFTNYVLRNKDAIDKFK.

Positions 1 to 18 (MFISILLLALAVERILCA) are cleaved as a signal peptide.

The protein belongs to the UDP-glycosyltransferase family.

Functionally, catalyzes the transfer of glucose from UDP-glucose to ecdysteroids which are insect molting hormones. Expression of egt interferes with normal insect development and block molting. The polypeptide is Ecdysteroid UDP-glucosyltransferase (EGT) (Lacanobia oleracea granulosis virus (LoGV)).